A 352-amino-acid polypeptide reads, in one-letter code: Aromatic amino acid aminotransferase (352 aa).

An N6-(pyridoxal phosphate)lysine modification is found at Lys-217.

Belongs to the class-II pyridoxal-phosphate-dependent aminotransferase family. Homodimer. The cofactor is pyridoxal 5'-phosphate.

The enzyme catalyses an aromatic L-alpha-amino acid + 2-oxoglutarate = an aromatic oxo-acid + L-glutamate. Functionally, aminotransferase that catalyzes the conversion of aromatic amino acids and 2-oxoglutarate into corresponding aromatic oxo acids and L-glutamate. In Cutibacterium acnes (strain DSM 16379 / KPA171202) (Propionibacterium acnes), this protein is Aromatic amino acid aminotransferase.